Here is a 503-residue protein sequence, read N- to C-terminus: Aspartyl/glutamyl-tRNA(Asn/Gln) amidotransferase subunit B (503 aa).

Belongs to the GatB/GatE family. GatB subfamily. Heterotrimer of A, B and C subunits.

It carries out the reaction L-glutamyl-tRNA(Gln) + L-glutamine + ATP + H2O = L-glutaminyl-tRNA(Gln) + L-glutamate + ADP + phosphate + H(+). It catalyses the reaction L-aspartyl-tRNA(Asn) + L-glutamine + ATP + H2O = L-asparaginyl-tRNA(Asn) + L-glutamate + ADP + phosphate + 2 H(+). Allows the formation of correctly charged Asn-tRNA(Asn) or Gln-tRNA(Gln) through the transamidation of misacylated Asp-tRNA(Asn) or Glu-tRNA(Gln) in organisms which lack either or both of asparaginyl-tRNA or glutaminyl-tRNA synthetases. The reaction takes place in the presence of glutamine and ATP through an activated phospho-Asp-tRNA(Asn) or phospho-Glu-tRNA(Gln). This is Aspartyl/glutamyl-tRNA(Asn/Gln) amidotransferase subunit B from Cereibacter sphaeroides (strain KD131 / KCTC 12085) (Rhodobacter sphaeroides).